The primary structure comprises 485 residues: MQVTETKSEGLKREFQVVLAAAELEDRLTTELAGMKDKVQLKGFRPGKVPVAHLRRVYGRSIMADVVQNAVNEANQKILEENKLKLALEPQIKMPEDKAEIEKALDAKADLAFQVALEVMPTFELQDHSDITVTKPVATVSDEEVETALKRMAEQSRSYADRPEGSAAETGDRVVIDFVGRIGGETFEGGSAEDADLDLGSNTFIPGFEDQLLGAKAGEARTVTVTFPEGYPAEHLAGKEAVFDVTVKAVKAPGEAQIDDELAKTFGLENLDALKDAVRKSLANELDAQSRRRVKKALLDALDARYAFDLPPTLVHQEFAAVWAQVEADLKSRGKTFEDEGTTEEKAQGEYRRIAERRVRLGLVLAQVGETADIKVPDEEVNQALIARLRQFPGQEREVYDFYRKNPQAMAELRAPLFEEKVVDHVLGQVKLVEEPVSKEALFADDEDEAAEAAAPASEAGASKGVISEGVISEGSAPSHETGAA.

Positions 171 to 256 (GDRVVIDFVG…VKAVKAPGEA (86 aa)) constitute a PPIase FKBP-type domain. The disordered stretch occupies residues 443-485 (FADDEDEAAEAAAPASEAGASKGVISEGVISEGSAPSHETGAA). Residues 452-462 (EAAAPASEAGA) show a composition bias toward low complexity.

Belongs to the FKBP-type PPIase family. Tig subfamily.

It is found in the cytoplasm. It carries out the reaction [protein]-peptidylproline (omega=180) = [protein]-peptidylproline (omega=0). Involved in protein export. Acts as a chaperone by maintaining the newly synthesized protein in an open conformation. Functions as a peptidyl-prolyl cis-trans isomerase. In Methylobacterium sp. (strain 4-46), this protein is Trigger factor.